Reading from the N-terminus, the 334-residue chain is Cathepsin K (334 aa).

The signal sequence occupies residues 1 to 19 (MLRLHWLALLVLLLPMAAA). The propeptide at 20–119 (QLRPEPELDA…TLYVPDWSSR (100 aa)) is activation peptide. N108 carries an N-linked (GlcNAc...) asparagine glycan. Disulfide bonds link C141-C182, C175-C215, and C274-C323. The active site involves C144. Catalysis depends on residues H281 and N301.

Belongs to the peptidase C1 family.

It carries out the reaction Broad proteolytic activity. With small-molecule substrates and inhibitors, the major determinant of specificity is P2, which is preferably Leu, Met &gt; Phe, and not Arg.. Its function is as follows. Closely involved in osteoclastic bone resorption and may participate partially in the disorder of bone remodeling. Displays potent endoprotease activity against fibrinogen at acid pH. May play an important role in extracellular matrix degradation. The protein is Cathepsin K (CTSK) of Gallus gallus (Chicken).